Reading from the N-terminus, the 122-residue chain is MAEMTVELVAVERRLWSGSATLVSAQTTEGEIGVMPGHEPVLGQLVEGGVVAITTADGERIVAAVHGGFLSVTAKTVTILAESADLAEDIDVEAAKAVLAESGDDLEAIAVAKGRVRAVERA.

It belongs to the ATPase epsilon chain family. As to quaternary structure, F-type ATPases have 2 components, CF(1) - the catalytic core - and CF(0) - the membrane proton channel. CF(1) has five subunits: alpha(3), beta(3), gamma(1), delta(1), epsilon(1). CF(0) has three main subunits: a, b and c.

The protein localises to the cell membrane. Functionally, produces ATP from ADP in the presence of a proton gradient across the membrane. In Rhodococcus opacus (strain B4), this protein is ATP synthase epsilon chain.